A 328-amino-acid polypeptide reads, in one-letter code: Tryptophan--tRNA ligase (328 aa).

ATP contacts are provided by residues 8 to 10 (RPT) and 16 to 17 (GH). The 'HIGH' region signature appears at 9 to 17 (PTGKLHIGH). An L-tryptophan-binding site is contributed by aspartate 136. Residues 148 to 150 (GED), leucine 186, and 193 to 197 (KMSKS) each bind ATP. A 'KMSKS' region motif is present at residues 193–197 (KMSKS).

The protein belongs to the class-I aminoacyl-tRNA synthetase family. In terms of assembly, homodimer.

Its subcellular location is the cytoplasm. The enzyme catalyses tRNA(Trp) + L-tryptophan + ATP = L-tryptophyl-tRNA(Trp) + AMP + diphosphate + H(+). Its function is as follows. Catalyzes the attachment of tryptophan to tRNA(Trp). This is Tryptophan--tRNA ligase from Thermotoga maritima (strain ATCC 43589 / DSM 3109 / JCM 10099 / NBRC 100826 / MSB8).